The following is a 249-amino-acid chain: DnaJ homolog subfamily C member 5 homolog (249 aa).

Ser-12 is modified (phosphoserine). The residue at position 13 (Thr-13) is a Phosphothreonine. 2 positions are modified to phosphoserine: Ser-14 and Ser-17. The region spanning 15-84 is the J domain; the sequence is GDSLYEILGL…RNIYDNYGSL (70 aa). Tyr-19 is subject to Phosphotyrosine. Positions 146 to 162 are enriched in basic and acidic residues; the sequence is HDQYSHLNRPDGNREGN. Disordered regions lie at residues 146–177 and 218–249; these read HDQY…LEDV and PFTG…NQKY. The span at 227 to 241 shows a compositional bias: polar residues; the sequence is NENTSLNTTEQTTYT.

Fatty acylated. Heavily palmitoylated in the cysteine string motif. Expressed in wide range of synaptic terminals: embryonic nervous system, larval neuromuscular junctions, adult visual system (neuropil of optic ganglia and terminal of R1-8 photoreceptors) and thoracic neuromuscular junctions. Also expressed in non-neuronal cells: follicle cells, spermatheca, testis and ejaculatory bulb. Low level of expression is found in many neuronal and non-neuronal tissues.

Its subcellular location is the membrane. May have an important role in presynaptic function. This is DnaJ homolog subfamily C member 5 homolog from Drosophila melanogaster (Fruit fly).